Consider the following 336-residue polypeptide: DNA repair protein Rad51 homolog (336 aa).

The segment covering 1–10 (MEKLTNVQAQ) has biased composition (polar residues). Positions 1 to 20 (MEKLTNVQAQQEEEEEEGPL) are disordered. 124-131 (GEFRCGKT) is a binding site for ATP.

This sequence belongs to the RecA family. RAD51 subfamily. In terms of assembly, interacts with Rrp6; the interaction is required for the recruitment of spn-A to the DNA-damage response foci. In terms of tissue distribution, highly expressed in ovaries.

The protein localises to the nucleus. It localises to the cytoplasm. Its function is as follows. Plays an important role in homologous strand exchange, a key step in DNA repair through homologous recombination (HR). Binds to single and double-stranded DNA and exhibits DNA-dependent ATPase activity. Underwinds duplex DNA. Spindle genes are required for each of the symmetry-breaking steps that generate polarity during egg axis formation; oocyte positioning at the posterior of the cyst to generate the first AP polarity and inhibition of gurken (grk) signaling to the follicle cell layer to polarize first the AP axis and then DV axis. May have a role in female meiosis. The chain is DNA repair protein Rad51 homolog (spn-A) from Drosophila melanogaster (Fruit fly).